Consider the following 170-residue polypeptide: Shikimate kinase (170 aa).

11–16 is an ATP binding site; it reads LSGKST. S15 provides a ligand contact to Mg(2+). 3 residues coordinate substrate: D33, R57, and G79. R119 contributes to the ATP binding site. A substrate-binding site is contributed by R137.

The protein belongs to the shikimate kinase family. In terms of assembly, monomer. The cofactor is Mg(2+).

It localises to the cytoplasm. It carries out the reaction shikimate + ATP = 3-phosphoshikimate + ADP + H(+). It participates in metabolic intermediate biosynthesis; chorismate biosynthesis; chorismate from D-erythrose 4-phosphate and phosphoenolpyruvate: step 5/7. In terms of biological role, catalyzes the specific phosphorylation of the 3-hydroxyl group of shikimic acid using ATP as a cosubstrate. This chain is Shikimate kinase, found in Clostridium botulinum (strain 657 / Type Ba4).